A 131-amino-acid chain; its full sequence is Small ribosomal subunit protein uS11 (131 aa).

It belongs to the universal ribosomal protein uS11 family. As to quaternary structure, part of the 30S ribosomal subunit. Interacts with proteins S7 and S18. Binds to IF-3.

Functionally, located on the platform of the 30S subunit, it bridges several disparate RNA helices of the 16S rRNA. Forms part of the Shine-Dalgarno cleft in the 70S ribosome. The polypeptide is Small ribosomal subunit protein uS11 (Neisseria gonorrhoeae (strain ATCC 700825 / FA 1090)).